The following is a 266-amino-acid chain: Eukaryotic translation initiation factor 3 subunit J (266 aa).

Disordered regions lie at residues 1 to 111 (MAPS…EKDA) and 217 to 266 (NEKM…DDFM). A compositionally biased stretch (acidic residues) spans 26–44 (DEEEEDVLDSWDAAEDSEV). A coiled-coil region spans residues 40 to 82 (EDSEVEREKAAKAAEAKAKAEAEAAANKKSKAQRIQEKKAQRK). Composition is skewed to basic and acidic residues over residues 45 to 61 (EREK…KAEA) and 73 to 85 (RIQE…KADA). Positions 86–97 (DAEDSDDSDEDE) are enriched in acidic residues. 2 stretches are compositionally biased toward basic and acidic residues: residues 98 to 111 (AERR…EKDA) and 218 to 230 (EKMK…DKGN). The segment covering 254–266 (SYDDDGLDDDDFM) has biased composition (acidic residues).

It belongs to the eIF-3 subunit J family. In terms of assembly, component of the eukaryotic translation initiation factor 3 (eIF-3) complex.

It is found in the cytoplasm. In terms of biological role, component of the eukaryotic translation initiation factor 3 (eIF-3) complex, which is involved in protein synthesis of a specialized repertoire of mRNAs and, together with other initiation factors, stimulates binding of mRNA and methionyl-tRNAi to the 40S ribosome. The eIF-3 complex specifically targets and initiates translation of a subset of mRNAs involved in cell proliferation. In Aspergillus niger (strain ATCC MYA-4892 / CBS 513.88 / FGSC A1513), this protein is Eukaryotic translation initiation factor 3 subunit J (hcr1).